We begin with the raw amino-acid sequence, 216 residues long: MPIGVPKVPYRIPGDEEATWVDLYNVMYRERTLFLGQEIRCEITNHITGLMVYLSIEDGISDIFLFINSPGGWLISGMAIFDTMQTVTPDIYTICLGIAASMASFILLGGEPAKRIAFPHARIMLHQPASAYYRARTPEFLLEVEELHKVREMITRVYALRTGKPFWVVSEDMERDVFMSADEAKAYGLVDIVGDEMIDKHCDTDPVWFPEMFKDW.

The Nucleophile role is filled by S101. Residue H126 is part of the active site.

Belongs to the peptidase S14 family. Component of the chloroplastic Clp protease core complex.

It localises to the plastid. It is found in the chloroplast stroma. It catalyses the reaction Hydrolysis of proteins to small peptides in the presence of ATP and magnesium. alpha-casein is the usual test substrate. In the absence of ATP, only oligopeptides shorter than five residues are hydrolyzed (such as succinyl-Leu-Tyr-|-NHMec, and Leu-Tyr-Leu-|-Tyr-Trp, in which cleavage of the -Tyr-|-Leu- and -Tyr-|-Trp bonds also occurs).. In terms of biological role, cleaves peptides in various proteins in a process that requires ATP hydrolysis. Has a chymotrypsin-like activity. Plays a major role in the degradation of misfolded proteins. In Hordeum vulgare (Barley), this protein is ATP-dependent Clp protease proteolytic subunit.